Consider the following 487-residue polypeptide: Glutamate--tRNA ligase 2 (487 aa).

The 'HIGH' region motif lies at 31 to 41 (PSPTGHLHVGG). Residues 254–258 (PLSKR) carry the 'KMSKS' region motif. Lys-257 provides a ligand contact to ATP.

It belongs to the class-I aminoacyl-tRNA synthetase family. Glutamate--tRNA ligase type 1 subfamily. Monomer.

It localises to the cytoplasm. The enzyme catalyses tRNA(Glu) + L-glutamate + ATP = L-glutamyl-tRNA(Glu) + AMP + diphosphate. In terms of biological role, catalyzes the attachment of glutamate to tRNA(Glu) in a two-step reaction: glutamate is first activated by ATP to form Glu-AMP and then transferred to the acceptor end of tRNA(Glu). The polypeptide is Glutamate--tRNA ligase 2 (Thermotoga maritima (strain ATCC 43589 / DSM 3109 / JCM 10099 / NBRC 100826 / MSB8)).